The chain runs to 227 residues: Cytochrome c oxidase subunit 2 (227 aa).

The Mitochondrial intermembrane segment spans residues 1–14; the sequence is MAYPMQLGFQDATS. The helical transmembrane segment at 15–45 threads the bilayer; that stretch reads PIMEELLHFHDHTLMIVLLISSLVLYIISLM. Residues 46-59 lie on the Mitochondrial matrix side of the membrane; that stretch reads LTTKLTHTSTMDAQ. The chain crosses the membrane as a helical span at residues 60-87; the sequence is EVETIWTILPAIILILIALPSLRILYMM. The Mitochondrial intermembrane portion of the chain corresponds to 88-227; sequence DEINNPSLTV…YFEKWSASML (140 aa). Residues H161, C196, E198, C200, H204, and M207 each contribute to the Cu cation site. E198 contacts Mg(2+). Y218 bears the Phosphotyrosine mark.

This sequence belongs to the cytochrome c oxidase subunit 2 family. Component of the cytochrome c oxidase (complex IV, CIV), a multisubunit enzyme composed of 14 subunits. The complex is composed of a catalytic core of 3 subunits MT-CO1, MT-CO2 and MT-CO3, encoded in the mitochondrial DNA, and 11 supernumerary subunits COX4I, COX5A, COX5B, COX6A, COX6B, COX6C, COX7A, COX7B, COX7C, COX8 and NDUFA4, which are encoded in the nuclear genome. The complex exists as a monomer or a dimer and forms supercomplexes (SCs) in the inner mitochondrial membrane with NADH-ubiquinone oxidoreductase (complex I, CI) and ubiquinol-cytochrome c oxidoreductase (cytochrome b-c1 complex, complex III, CIII), resulting in different assemblies (supercomplex SCI(1)III(2)IV(1) and megacomplex MCI(2)III(2)IV(2)). Found in a complex with TMEM177, COA6, COX18, COX20, SCO1 and SCO2. Interacts with TMEM177 in a COX20-dependent manner. Interacts with COX20. Interacts with COX16. It depends on Cu cation as a cofactor.

Its subcellular location is the mitochondrion inner membrane. The enzyme catalyses 4 Fe(II)-[cytochrome c] + O2 + 8 H(+)(in) = 4 Fe(III)-[cytochrome c] + 2 H2O + 4 H(+)(out). Component of the cytochrome c oxidase, the last enzyme in the mitochondrial electron transport chain which drives oxidative phosphorylation. The respiratory chain contains 3 multisubunit complexes succinate dehydrogenase (complex II, CII), ubiquinol-cytochrome c oxidoreductase (cytochrome b-c1 complex, complex III, CIII) and cytochrome c oxidase (complex IV, CIV), that cooperate to transfer electrons derived from NADH and succinate to molecular oxygen, creating an electrochemical gradient over the inner membrane that drives transmembrane transport and the ATP synthase. Cytochrome c oxidase is the component of the respiratory chain that catalyzes the reduction of oxygen to water. Electrons originating from reduced cytochrome c in the intermembrane space (IMS) are transferred via the dinuclear copper A center (CU(A)) of subunit 2 and heme A of subunit 1 to the active site in subunit 1, a binuclear center (BNC) formed by heme A3 and copper B (CU(B)). The BNC reduces molecular oxygen to 2 water molecules using 4 electrons from cytochrome c in the IMS and 4 protons from the mitochondrial matrix. The protein is Cytochrome c oxidase subunit 2 (MT-CO2) of Bubalus depressicornis (Lowland anoa).